We begin with the raw amino-acid sequence, 380 residues long: Cytochrome b (380 aa).

4 helical membrane-spanning segments follow: residues 33–53, 77–98, 113–133, and 178–198; these read FGSLLGACLILQITTGLFLAM, WTIRYLHANGASMFFICLFLHI, WNIGIILLLTTMAAAFMGYVL, and FFTFHFILPFIITALTTLHLL. 2 residues coordinate heme b: histidine 83 and histidine 97. Residues histidine 182 and histidine 196 each coordinate heme b. An a ubiquinone-binding site is contributed by histidine 201. Helical transmembrane passes span 226 to 246, 288 to 308, 320 to 340, and 347 to 367; these read IKDILGLFLFLLTLMTLTLFS, LGGVLALLLSILILAMIPILH, LSQLLYWFLIADLFTLTWIGG, and FITIGQVASVLYFTTILFLMP.

The protein belongs to the cytochrome b family. The cytochrome bc1 complex contains 11 subunits: 3 respiratory subunits (MT-CYB, CYC1 and UQCRFS1), 2 core proteins (UQCRC1 and UQCRC2) and 6 low-molecular weight proteins (UQCRH/QCR6, UQCRB/QCR7, UQCRQ/QCR8, UQCR10/QCR9, UQCR11/QCR10 and a cleavage product of UQCRFS1). This cytochrome bc1 complex then forms a dimer. It depends on heme b as a cofactor.

Its subcellular location is the mitochondrion inner membrane. Its function is as follows. Component of the ubiquinol-cytochrome c reductase complex (complex III or cytochrome b-c1 complex) that is part of the mitochondrial respiratory chain. The b-c1 complex mediates electron transfer from ubiquinol to cytochrome c. Contributes to the generation of a proton gradient across the mitochondrial membrane that is then used for ATP synthesis. The polypeptide is Cytochrome b (MT-CYB) (Gorilla gorilla gorilla (Western lowland gorilla)).